The following is a 659-amino-acid chain: DNA mismatch repair protein MutL (659 aa).

The interval 338–459 is disordered; that stretch reads GAPRGASKPG…DTTSERDSLP (122 aa). The span at 352–362 shows a compositional bias: basic and acidic residues; that stretch reads SPEHSPTDRDA. The segment covering 374-391 has biased composition (polar residues); the sequence is SDGNGQRTAASGATSESP.

It belongs to the DNA mismatch repair MutL/HexB family.

This protein is involved in the repair of mismatches in DNA. It is required for dam-dependent methyl-directed DNA mismatch repair. May act as a 'molecular matchmaker', a protein that promotes the formation of a stable complex between two or more DNA-binding proteins in an ATP-dependent manner without itself being part of a final effector complex. The polypeptide is DNA mismatch repair protein MutL (Halobacterium salinarum (strain ATCC 29341 / DSM 671 / R1)).